A 31-amino-acid chain; its full sequence is Cytochrome b6-f complex subunit 6 (31 aa).

The helical transmembrane segment at 4 to 24 (ITSYFGFLLAALTITSAIFIG) threads the bilayer.

It belongs to the PetL family. In terms of assembly, the 4 large subunits of the cytochrome b6-f complex are cytochrome b6, subunit IV (17 kDa polypeptide, PetD), cytochrome f and the Rieske protein, while the 4 small subunits are PetG, PetL, PetM and PetN. The complex functions as a dimer.

The protein localises to the plastid. It localises to the chloroplast thylakoid membrane. Functionally, component of the cytochrome b6-f complex, which mediates electron transfer between photosystem II (PSII) and photosystem I (PSI), cyclic electron flow around PSI, and state transitions. PetL is important for photoautotrophic growth as well as for electron transfer efficiency and stability of the cytochrome b6-f complex. The chain is Cytochrome b6-f complex subunit 6 from Ficus carica (Common fig).